The primary structure comprises 428 residues: Histidinol dehydrogenase (428 aa).

Y125, Q187, and N210 together coordinate NAD(+). Substrate-binding residues include S234, Q256, and H259. Zn(2+) contacts are provided by Q256 and H259. Catalysis depends on proton acceptor residues E323 and H324. Positions 324, 357, 411, and 416 each coordinate substrate. Residue D357 coordinates Zn(2+). H416 provides a ligand contact to Zn(2+).

This sequence belongs to the histidinol dehydrogenase family. Zn(2+) serves as cofactor.

It carries out the reaction L-histidinol + 2 NAD(+) + H2O = L-histidine + 2 NADH + 3 H(+). The protein operates within amino-acid biosynthesis; L-histidine biosynthesis; L-histidine from 5-phospho-alpha-D-ribose 1-diphosphate: step 9/9. Catalyzes the sequential NAD-dependent oxidations of L-histidinol to L-histidinaldehyde and then to L-histidine. The protein is Histidinol dehydrogenase of Bacteroides thetaiotaomicron (strain ATCC 29148 / DSM 2079 / JCM 5827 / CCUG 10774 / NCTC 10582 / VPI-5482 / E50).